A 210-amino-acid chain; its full sequence is Thymidylate kinase (210 aa).

An ATP-binding site is contributed by 11-18 (GVDGSGKS).

This sequence belongs to the thymidylate kinase family.

The catalysed reaction is dTMP + ATP = dTDP + ADP. Functionally, phosphorylation of dTMP to form dTDP in both de novo and salvage pathways of dTTP synthesis. This Mycoplasmoides gallisepticum (strain R(low / passage 15 / clone 2)) (Mycoplasma gallisepticum) protein is Thymidylate kinase.